Here is a 384-residue protein sequence, read N- to C-terminus: S-adenosylmethionine synthase (384 aa).

His-15 contacts ATP. Asp-17 is a Mg(2+) binding site. K(+) is bound at residue Glu-43. Residues Glu-56 and Gln-99 each contribute to the L-methionine site. The segment at 99-109 (QSADINQGVDR) is flexible loop. ATP contacts are provided by residues 164 to 166 (DAK), 230 to 231 (RF), Asp-239, 245 to 246 (RK), Ala-262, and Lys-266. Asp-239 is an L-methionine binding site. Residue Lys-270 participates in L-methionine binding.

It belongs to the AdoMet synthase family. Homotetramer; dimer of dimers. Mg(2+) is required as a cofactor. Requires K(+) as cofactor.

It localises to the cytoplasm. It carries out the reaction L-methionine + ATP + H2O = S-adenosyl-L-methionine + phosphate + diphosphate. It participates in amino-acid biosynthesis; S-adenosyl-L-methionine biosynthesis; S-adenosyl-L-methionine from L-methionine: step 1/1. In terms of biological role, catalyzes the formation of S-adenosylmethionine (AdoMet) from methionine and ATP. The overall synthetic reaction is composed of two sequential steps, AdoMet formation and the subsequent tripolyphosphate hydrolysis which occurs prior to release of AdoMet from the enzyme. This chain is S-adenosylmethionine synthase, found in Haemophilus influenzae (strain PittGG).